A 449-amino-acid chain; its full sequence is Ribosomal protein uS12 methylthiotransferase RimO (449 aa).

One can recognise an MTTase N-terminal domain in the interval 5 to 116; sequence PTIAISHLGC…IVDVVQRVEN (112 aa). [4Fe-4S] cluster is bound by residues cysteine 14, cysteine 50, cysteine 79, cysteine 154, cysteine 158, and cysteine 161. The Radical SAM core domain occupies 140-369; that stretch reads TTTEGVAYLR…MEVQQPISIK (230 aa). The 67-residue stretch at 372–438 folds into the TRAM domain; that stretch reads QNCIGQTVPV…VYDLYGKTNL (67 aa).

Belongs to the methylthiotransferase family. RimO subfamily. The cofactor is [4Fe-4S] cluster.

The protein resides in the cytoplasm. The enzyme catalyses L-aspartate(89)-[ribosomal protein uS12]-hydrogen + (sulfur carrier)-SH + AH2 + 2 S-adenosyl-L-methionine = 3-methylsulfanyl-L-aspartate(89)-[ribosomal protein uS12]-hydrogen + (sulfur carrier)-H + 5'-deoxyadenosine + L-methionine + A + S-adenosyl-L-homocysteine + 2 H(+). Functionally, catalyzes the methylthiolation of an aspartic acid residue of ribosomal protein uS12. The protein is Ribosomal protein uS12 methylthiotransferase RimO of Rippkaea orientalis (strain PCC 8801 / RF-1) (Cyanothece sp. (strain PCC 8801)).